Here is a 246-residue protein sequence, read N- to C-terminus: Phosphomannomutase 2 (246 aa).

N-acetylalanine is present on Ala2. Catalysis depends on Asp12, which acts as the Nucleophile. Mg(2+)-binding residues include Asp12 and Asp14. Catalysis depends on Asp14, which acts as the Proton donor/acceptor. Residues Arg21, Arg123, Arg134, and Arg141 each coordinate alpha-D-mannose 1-phosphate. N6-acetyllysine is present on Lys149. Alpha-D-mannose 1-phosphate-binding residues include Ser179 and Asp181. Mg(2+)-binding residues include Asp209, Phe221, Asp223, and Thr226.

The protein belongs to the eukaryotic PMM family. In terms of assembly, homodimer.

It is found in the cytoplasm. The enzyme catalyses alpha-D-mannose 1-phosphate = D-mannose 6-phosphate. Its pathway is nucleotide-sugar biosynthesis; GDP-alpha-D-mannose biosynthesis; alpha-D-mannose 1-phosphate from D-fructose 6-phosphate: step 2/2. Its function is as follows. Involved in the synthesis of the GDP-mannose and dolichol-phosphate-mannose required for a number of critical mannosyl transfer reactions. The protein is Phosphomannomutase 2 (PMM2) of Homo sapiens (Human).